The following is a 690-amino-acid chain: Proprotein convertase subtilisin/kexin type 9 (690 aa).

Residues 1-28 form the signal peptide; the sequence is MGTVSSRRSWWPLPLLLLLLLGPAGARA. The propeptide occupies 29–150; the sequence is QEDEDGDYEE…IEEDSSVFAQ (122 aa). Tyrosine 36 bears the Sulfotyrosine mark. Residue serine 45 is modified to Phosphoserine. Positions 75–147 constitute an Inhibitor I9 domain; the sequence is TYVVVLKEET…VDYIEEDSSV (73 aa). In terms of domain architecture, Peptidase S8 spans 153-459; it reads PWNLERITPP…GWQLFCRTVW (307 aa). Residues aspartate 184 and histidine 224 each act as charge relay system in the active site. 2 disulfide bridges follow: cysteine 221–cysteine 253 and cysteine 321–cysteine 356. Serine 384 serves as the catalytic Charge relay system. Positions 448-690 are C-terminal domain; sequence GAGWQLFCRT…HLVQASQELQ (243 aa). 3 cysteine pairs are disulfide-bonded: cysteine 455–cysteine 525, cysteine 475–cysteine 524, and cysteine 484–cysteine 507. The N-linked (GlcNAc...) asparagine glycan is linked to asparagine 531. Cystine bridges form between cysteine 532/cysteine 599, cysteine 550/cysteine 598, cysteine 560/cysteine 586, cysteine 606/cysteine 677, cysteine 624/cysteine 676, and cysteine 633/cysteine 652. Serine 686 is subject to Phosphoserine.

It belongs to the peptidase S8 family. As to quaternary structure, monomer. Can self-associate to form dimers and higher multimers which may have increased LDLR degrading activity. The precursor protein but not the mature protein may form multimers. Interacts with APOB, VLDLR, LRP8/APOER2 and BACE1. The full-length immature form (pro-PCSK9) interacts with SCNN1A, SCNN1B and SCNN1G. The pro-PCSK9 form (via C-terminal domain) interacts with LDLR. Interacts (via the C-terminal domain) with ANXA2 (via repeat Annexin 1); the interaction inhibits the degradation of LDLR. It depends on Ca(2+) as a cofactor. In terms of processing, cleavage by furin and PCSK5 generates a truncated inactive protein that is unable to induce LDLR degradation. Undergoes autocatalytic cleavage in the endoplasmic reticulum to release the propeptide from the N-terminus and the cleavage of the propeptide is strictly required for its maturation and activation. The cleaved propeptide however remains associated with the catalytic domain through non-covalent interactions, preventing potential substrates from accessing its active site. As a result, it is secreted from cells as a propeptide-containing, enzymatically inactive protein. Post-translationally, phosphorylation protects the propeptide against proteolysis.

It localises to the cytoplasm. Its subcellular location is the secreted. It is found in the endosome. The protein localises to the lysosome. The protein resides in the cell surface. It localises to the endoplasmic reticulum. Its subcellular location is the golgi apparatus. With respect to regulation, its proteolytic activity is autoinhibited by the non-covalent binding of the propeptide to the catalytic domain. Inhibited by EGTA. Crucial player in the regulation of plasma cholesterol homeostasis. Binds to low-density lipid receptor family members: low density lipoprotein receptor (LDLR), very low density lipoprotein receptor (VLDLR), apolipoprotein E receptor (LRP1/APOER) and apolipoprotein receptor 2 (LRP8/APOER2), and promotes their degradation in intracellular acidic compartments. Acts via a non-proteolytic mechanism to enhance the degradation of the hepatic LDLR through a clathrin LDLRAP1/ARH-mediated pathway. May prevent the recycling of LDLR from endosomes to the cell surface or direct it to lysosomes for degradation. Can induce ubiquitination of LDLR leading to its subsequent degradation. Inhibits intracellular degradation of APOB via the autophagosome/lysosome pathway in a LDLR-independent manner. Involved in the disposal of non-acetylated intermediates of BACE1 in the early secretory pathway. Inhibits epithelial Na(+) channel (ENaC)-mediated Na(+) absorption by reducing ENaC surface expression primarily by increasing its proteasomal degradation. Regulates neuronal apoptosis via modulation of LRP8/APOER2 levels and related anti-apoptotic signaling pathways. This chain is Proprotein convertase subtilisin/kexin type 9 (PCSK9), found in Gorilla gorilla gorilla (Western lowland gorilla).